The following is a 393-amino-acid chain: Acyltransferase ato1 (393 aa).

The protein belongs to the lysine N-acyltransferase mbtK family.

Its pathway is siderophore biosynthesis; ferrichrome biosynthesis. In terms of biological role, L-ornithine N(5)-monooxygenase; part of the siderophore biosynthetic pathway. Omphalotus olearius produces ferrichrome A, but no other siderophore has been detected. Ferrichrome A consists of a hexapeptide ring made up of one glycine, two serine, and three N(5)-hydroxyornithine amino acid residues, the latter acylated by trans-(alpha-methyl)-glutaconic acid residues. The biosynthesis of ferrichrome A depends on the hydroxylation of ornithine to N(5)-hydroxyornithine, catalyzed by the monooxygenase omo1. The second step, the acylation of N(5)-hydroxy-L-ornithine is probably catalyzed by the N-acyltransferase ato1. Finally, assembly of ferrichrome A is catalyzed by the nonribosomal peptide synthase (NRPS) fso1. The chain is Acyltransferase ato1 from Omphalotus olearius (Jack o'lantern).